The chain runs to 104 residues: Alpha-amylase inhibitor HOE-467A (104 aa).

The first 30 residues, 1–30 (MRVRALRLAALVGAGAALALSPLAAGPASA), serve as a signal peptide directing secretion. 2 disulfide bridges follow: Cys41–Cys57 and Cys75–Cys103.

In terms of biological role, inhibits mammalian alpha-amylases specifically but has no action on plant and microbial alpha-amylases. Forms a tight stoichiometric 1:1 complex with alpha-amylase. The protein is Alpha-amylase inhibitor HOE-467A of Streptomyces tendae.